Consider the following 1210-residue polypeptide: DNA-directed RNA polymerase II subunit RPB2 (1210 aa).

Asp826 contacts Mg(2+). Positions 1152, 1155, 1170, and 1173 each coordinate Zn(2+). Residues 1152–1173 (CDICGLIAIASYKKDSYECRSC) form a C4-type zinc finger.

It belongs to the RNA polymerase beta chain family. As to quaternary structure, component of the RNA polymerase II (Pol II) complex consisting of 12 subunits.

The protein resides in the nucleus. The catalysed reaction is RNA(n) + a ribonucleoside 5'-triphosphate = RNA(n+1) + diphosphate. Its function is as follows. DNA-dependent RNA polymerase catalyzes the transcription of DNA into RNA using the four ribonucleoside triphosphates as substrates. Second largest component of RNA polymerase II which synthesizes mRNA precursors and many functional non-coding RNAs. Proposed to contribute to the polymerase catalytic activity and forms the polymerase active center together with the largest subunit. Pol II is the central component of the basal RNA polymerase II transcription machinery. It is composed of mobile elements that move relative to each other. RPB2 is part of the core element with the central large cleft, the clamp element that moves to open and close the cleft and the jaws that are thought to grab the incoming DNA template. This is DNA-directed RNA polymerase II subunit RPB2 (rpb2) from Schizosaccharomyces pombe (strain 972 / ATCC 24843) (Fission yeast).